The chain runs to 324 residues: Thiazole synthase (324 aa).

The Schiff-base intermediate with DXP role is filled by Lys167. 1-deoxy-D-xylulose 5-phosphate contacts are provided by residues Gly228, 254–255 (AG), and 276–277 (NT).

The protein belongs to the ThiG family. In terms of assembly, homotetramer. Forms heterodimers with either ThiH or ThiS.

Its subcellular location is the cytoplasm. It carries out the reaction [ThiS sulfur-carrier protein]-C-terminal-Gly-aminoethanethioate + 2-iminoacetate + 1-deoxy-D-xylulose 5-phosphate = [ThiS sulfur-carrier protein]-C-terminal Gly-Gly + 2-[(2R,5Z)-2-carboxy-4-methylthiazol-5(2H)-ylidene]ethyl phosphate + 2 H2O + H(+). Its pathway is cofactor biosynthesis; thiamine diphosphate biosynthesis. Its function is as follows. Catalyzes the rearrangement of 1-deoxy-D-xylulose 5-phosphate (DXP) to produce the thiazole phosphate moiety of thiamine. Sulfur is provided by the thiocarboxylate moiety of the carrier protein ThiS. In vitro, sulfur can be provided by H(2)S. This Paramagnetospirillum magneticum (strain ATCC 700264 / AMB-1) (Magnetospirillum magneticum) protein is Thiazole synthase.